We begin with the raw amino-acid sequence, 209 residues long: Uracil phosphoribosyltransferase (209 aa).

5-phospho-alpha-D-ribose 1-diphosphate is bound by residues Arg79, Arg104, and 131–139 (DPMLATGGS). Uracil is bound by residues Ile194 and 199–201 (GDA). Asp200 is a binding site for 5-phospho-alpha-D-ribose 1-diphosphate.

The protein belongs to the UPRTase family. Mg(2+) is required as a cofactor.

The catalysed reaction is UMP + diphosphate = 5-phospho-alpha-D-ribose 1-diphosphate + uracil. It functions in the pathway pyrimidine metabolism; UMP biosynthesis via salvage pathway; UMP from uracil: step 1/1. Its activity is regulated as follows. Allosterically activated by GTP. In terms of biological role, catalyzes the conversion of uracil and 5-phospho-alpha-D-ribose 1-diphosphate (PRPP) to UMP and diphosphate. This Lactobacillus gasseri (strain ATCC 33323 / DSM 20243 / BCRC 14619 / CIP 102991 / JCM 1131 / KCTC 3163 / NCIMB 11718 / NCTC 13722 / AM63) protein is Uracil phosphoribosyltransferase.